We begin with the raw amino-acid sequence, 347 residues long: NADH-quinone oxidoreductase subunit H 1 (347 aa).

Transmembrane regions (helical) follow at residues 14–34 (IMIGQSLLLLVALLLFIAYVL), 50–70 (PNVVGPFGLFQSFADLLKFVF), 83–103 (IFLLAPLVSVTLALAAWAVIP), 115–135 (VGILFVFAISSLEVYGIIMGG), 161–181 (IGFVIVTVLLCVGSLNLTDIV), 198–218 (FLDWHWLSLFPMFIIFFISAL), 258–278 (AICLMCALTTILFLGGWLPPV), 286–306 (VPGIIWFVLKASLVFFMFAMV), and 321–341 (LGWKVFLPLSLAMVVIVAFVL).

Belongs to the complex I subunit 1 family. NDH-1 is composed of 14 different subunits. Subunits NuoA, H, J, K, L, M, N constitute the membrane sector of the complex.

The protein localises to the cell inner membrane. The enzyme catalyses a quinone + NADH + 5 H(+)(in) = a quinol + NAD(+) + 4 H(+)(out). In terms of biological role, NDH-1 shuttles electrons from NADH, via FMN and iron-sulfur (Fe-S) centers, to quinones in the respiratory chain. The immediate electron acceptor for the enzyme in this species is believed to be ubiquinone. Couples the redox reaction to proton translocation (for every two electrons transferred, four hydrogen ions are translocated across the cytoplasmic membrane), and thus conserves the redox energy in a proton gradient. This subunit may bind ubiquinone. This Rhizobium meliloti (strain 1021) (Ensifer meliloti) protein is NADH-quinone oxidoreductase subunit H 1.